The chain runs to 111 residues: Probable 4-amino-4-deoxy-L-arabinose-phosphoundecaprenol flippase subunit ArnE (111 aa).

3 consecutive transmembrane segments (helical) span residues 38-58, 61-81, and 91-111; these read LWLG…LLVL, LPVG…TLAA, and PRHW…GSAA. An EamA domain is found at 40–109; that stretch reads LGLALICMGA…IISGIIILGS (70 aa).

Belongs to the ArnE family. As to quaternary structure, heterodimer of ArnE and ArnF.

It localises to the cell inner membrane. It participates in bacterial outer membrane biogenesis; lipopolysaccharide biosynthesis. In terms of biological role, translocates 4-amino-4-deoxy-L-arabinose-phosphoundecaprenol (alpha-L-Ara4N-phosphoundecaprenol) from the cytoplasmic to the periplasmic side of the inner membrane. This chain is Probable 4-amino-4-deoxy-L-arabinose-phosphoundecaprenol flippase subunit ArnE, found in Salmonella paratyphi B (strain ATCC BAA-1250 / SPB7).